We begin with the raw amino-acid sequence, 301 residues long: Probable alpha-L-glutamate ligase (301 aa).

Positions 104–287 (LQLLSRRGVG…VAGLIIQYLE (184 aa)) constitute an ATP-grasp domain. Residues Lys141, 178 to 179 (EY), Asp187, and 211 to 213 (RSN) each bind ATP. Mg(2+)-binding residues include Asp248, Glu260, and Asn262. Mn(2+)-binding residues include Asp248, Glu260, and Asn262.

It belongs to the RimK family. Mg(2+) serves as cofactor. It depends on Mn(2+) as a cofactor.

In Stutzerimonas stutzeri (strain A1501) (Pseudomonas stutzeri), this protein is Probable alpha-L-glutamate ligase.